A 229-amino-acid polypeptide reads, in one-letter code: Uracil-DNA glycosylase (229 aa).

The Proton acceptor role is filled by aspartate 72.

Belongs to the uracil-DNA glycosylase (UDG) superfamily. UNG family.

It is found in the cytoplasm. It catalyses the reaction Hydrolyzes single-stranded DNA or mismatched double-stranded DNA and polynucleotides, releasing free uracil.. Excises uracil residues from the DNA which can arise as a result of misincorporation of dUMP residues by DNA polymerase or due to deamination of cytosine. The sequence is that of Uracil-DNA glycosylase from Dichelobacter nodosus (strain VCS1703A).